The chain runs to 187 residues: MGLTPAPQEGLVINPATDRPLAANDPYFLSINDKLADKGFLVTSTDELINWARTGSLMWMTFGLACCAVEMMQASMPRYDVERFGFAPRGSPRQSDVMIVAGTLTNKMAPALRKVYDQMPEPRYVISMGSCANGGGYYHYSYSVVRGCDRIVPVDIYVPGCPPSAEALLYGILLLQRKIRRTGTIER.

Cys-66, Cys-67, Cys-131, and Cys-161 together coordinate [4Fe-4S] cluster.

Belongs to the complex I 20 kDa subunit family. In terms of assembly, NDH-1 is composed of 14 different subunits. Subunits NuoB, C, D, E, F, and G constitute the peripheral sector of the complex. It depends on [4Fe-4S] cluster as a cofactor.

It localises to the cell inner membrane. It carries out the reaction a quinone + NADH + 5 H(+)(in) = a quinol + NAD(+) + 4 H(+)(out). In terms of biological role, NDH-1 shuttles electrons from NADH, via FMN and iron-sulfur (Fe-S) centers, to quinones in the respiratory chain. The immediate electron acceptor for the enzyme in this species is believed to be ubiquinone. Couples the redox reaction to proton translocation (for every two electrons transferred, four hydrogen ions are translocated across the cytoplasmic membrane), and thus conserves the redox energy in a proton gradient. In Methylocella silvestris (strain DSM 15510 / CIP 108128 / LMG 27833 / NCIMB 13906 / BL2), this protein is NADH-quinone oxidoreductase subunit B.